Consider the following 263-residue polypeptide: UPF0739 protein C1orf74 homolog (263 aa).

The protein belongs to the UPF0739 family.

This chain is UPF0739 protein C1orf74 homolog, found in Mus musculus (Mouse).